Reading from the N-terminus, the 218-residue chain is MSDSSSVYDWFQERLEIQDITDDVTSKYVPPHVNIFYCLGGITLVCFLIQFATGFAMTFYYKPTVTQAYNSVSYLMTDVSFGWLIRSVHRWSASMMVLMLILHVFRVYLTGGFKRPRELTWVTGVVMAVITVAFGVTGYSLPWDQVGYWAVKIVSGVPAAIPIIGDFMVELLRGGESVGQSTLTRFYSLHTFVLPWSLAVFMLMHFLMIRKQGISGPL.

The helical transmembrane segment at 35–55 (IFYCLGGITLVCFLIQFATGF) threads the bilayer. Cys-38 provides a ligand contact to heme c. His-89 and His-103 together coordinate heme b. 3 consecutive transmembrane segments (helical) span residues 93–113 (ASMM…TGGF), 119–139 (LTWV…VTGY), and 189–209 (LHTF…FLMI). The heme b site is built by His-190 and His-205.

It belongs to the cytochrome b family. PetB subfamily. The 4 large subunits of the cytochrome b6-f complex are cytochrome b6, subunit IV (17 kDa polypeptide, PetD), cytochrome f and the Rieske protein, while the 4 small subunits are PetG, PetL, PetM and PetN. The complex functions as a dimer. Heme b serves as cofactor. The cofactor is heme c.

It localises to the cellular thylakoid membrane. In terms of biological role, component of the cytochrome b6-f complex, which mediates electron transfer between photosystem II (PSII) and photosystem I (PSI), cyclic electron flow around PSI, and state transitions. In Prochlorococcus marinus subsp. pastoris (strain CCMP1986 / NIES-2087 / MED4), this protein is Cytochrome b6.